We begin with the raw amino-acid sequence, 415 residues long: Gamma-glutamyl phosphate reductase (415 aa).

It belongs to the gamma-glutamyl phosphate reductase family.

The protein resides in the cytoplasm. It catalyses the reaction L-glutamate 5-semialdehyde + phosphate + NADP(+) = L-glutamyl 5-phosphate + NADPH + H(+). It participates in amino-acid biosynthesis; L-proline biosynthesis; L-glutamate 5-semialdehyde from L-glutamate: step 2/2. Catalyzes the NADPH-dependent reduction of L-glutamate 5-phosphate into L-glutamate 5-semialdehyde and phosphate. The product spontaneously undergoes cyclization to form 1-pyrroline-5-carboxylate. This Salmonella dublin (strain CT_02021853) protein is Gamma-glutamyl phosphate reductase.